Reading from the N-terminus, the 366-residue chain is tRNA-specific 2-thiouridylase MnmA (366 aa).

Residues 6-13 and Leu32 each bind ATP; that span reads AMSGGVDS. Residue Cys101 is the Nucleophile of the active site. A disulfide bond links Cys101 and Cys198. Gly125 provides a ligand contact to ATP. An interaction with tRNA region spans residues 148-150; the sequence is KDQ. Cys198 acts as the Cysteine persulfide intermediate in catalysis.

Belongs to the MnmA/TRMU family.

It localises to the cytoplasm. It catalyses the reaction S-sulfanyl-L-cysteinyl-[protein] + uridine(34) in tRNA + AH2 + ATP = 2-thiouridine(34) in tRNA + L-cysteinyl-[protein] + A + AMP + diphosphate + H(+). In terms of biological role, catalyzes the 2-thiolation of uridine at the wobble position (U34) of tRNA, leading to the formation of s(2)U34. This chain is tRNA-specific 2-thiouridylase MnmA, found in Nocardioides sp. (strain ATCC BAA-499 / JS614).